Reading from the N-terminus, the 654-residue chain is Bifunctional 3'-phosphoadenosine 5'-phosphosulfate synthase pps-1 (654 aa).

Residues 1–26 are disordered; the sequence is MLTPRDENNEGDAMPMLKKPRYSSLS. The interval 1 to 231 is adenylyl-sulfate kinase; sequence MLTPRDENNE…VLDHLESKGL (231 aa). 66 to 71 is an ATP binding site; sequence GAGKTT. Adenosine 5'-phosphosulfate contacts are provided by residues 93-96, phenylalanine 105, 110-113, 136-137, lysine 175, and 190-191; these read DNIR, RQEN, IS, and GF. Residues cysteine 218, 449-452, 550-554, and alanine 592 contribute to the ATP site; these read QLRN and GRDPA. Residues 242–653 are sulfate adenylyltransferase; sequence VRELFVSDDL…AGYYKSLQNS (412 aa).

The protein in the N-terminal section; belongs to the APS kinase family. In the C-terminal section; belongs to the sulfate adenylyltransferase family.

The protein resides in the nucleus. It carries out the reaction sulfate + ATP + H(+) = adenosine 5'-phosphosulfate + diphosphate. The enzyme catalyses adenosine 5'-phosphosulfate + ATP = 3'-phosphoadenylyl sulfate + ADP + H(+). Its pathway is sulfur metabolism; sulfate assimilation. Its function is as follows. Bifunctional enzyme with both ATP sulfurylase and APS kinase activity, which mediates two steps in the sulfate activation pathway. The first step is the transfer of a sulfate group to ATP to yield adenosine 5'-phosphosulfate (APS), and the second step is the transfer of a phosphate group from ATP to APS yielding 3'-phosphoadenylylsulfate (PAPS: activated sulfate donor used by sulfotransferase). Required for normal growth and development. Involved in several aspects of both embryonic and postembryonic development, including molting, changes in cell shape, and patterning of epithelial and muscle cells. The protein is Bifunctional 3'-phosphoadenosine 5'-phosphosulfate synthase pps-1 of Caenorhabditis elegans.